The following is a 207-amino-acid chain: Outer-membrane lipoprotein LolB (207 aa).

The N-terminal stretch at 1-21 (MPQRKISFYRLLPLATLLLAA) is a signal peptide. Cys22 carries N-palmitoyl cysteine lipidation. Cys22 carries the S-diacylglycerol cysteine lipid modification.

This sequence belongs to the LolB family. As to quaternary structure, monomer.

The protein localises to the cell outer membrane. Its function is as follows. Plays a critical role in the incorporation of lipoproteins in the outer membrane after they are released by the LolA protein. The sequence is that of Outer-membrane lipoprotein LolB from Yersinia enterocolitica serotype O:8 / biotype 1B (strain NCTC 13174 / 8081).